A 516-amino-acid polypeptide reads, in one-letter code: Exoglucanase 1 (516 aa).

A signal peptide spans 1–17 (MRASLLAFSLAAAVAGG). The tract at residues 18 to 445 (QQAGTLTAKR…GHLGISPFSG (428 aa)) is catalytic. The N-linked (GlcNAc...) asparagine glycan is linked to Asn-45. Glu-223 functions as the Nucleophile in the catalytic mechanism. Catalysis depends on Glu-228, which acts as the Proton donor. A glycan (N-linked (GlcNAc...) asparagine) is linked at Asn-281. The disordered stretch occupies residues 444–481 (SGGSSGTPPSNPSSSASPTSSTAKPSSTSTASNPSGTG). A linker region spans residues 446-480 (GSSGTPPSNPSSSASPTSSTAKPSSTSTASNPSGT). Over residues 449–481 (GTPPSNPSSSASPTSSTAKPSSTSTASNPSGTG) the composition is skewed to low complexity. A CBM1 domain is found at 480–516 (TGAAHWAQCGGIGFSGPTTCPEPYTCAKDHDIYSQCV). Disulfide bonds link Cys-488–Cys-505 and Cys-499–Cys-515.

The protein belongs to the glycosyl hydrolase 7 (cellulase C) family.

It is found in the secreted. It carries out the reaction Hydrolysis of (1-&gt;4)-beta-D-glucosidic linkages in cellulose and cellotetraose, releasing cellobiose from the non-reducing ends of the chains.. The sequence is that of Exoglucanase 1 (cbh-1) from Neurospora crassa (strain ATCC 24698 / 74-OR23-1A / CBS 708.71 / DSM 1257 / FGSC 987).